A 480-amino-acid chain; its full sequence is EGF-like repeat and discoidin I-like domain-containing protein 3 (480 aa).

The N-terminal stretch at methionine 1–glycine 23 is a signal peptide. The EGF-like 1 domain maps to aspartate 24–serine 60. Intrachain disulfides connect cysteine 26-cysteine 37, cysteine 31-cysteine 48, and cysteine 50-cysteine 59. Threonine 73 carries O-linked (GalNAc...) threonine glycosylation. 2 consecutive EGF-like domains span residues serine 74 to glutamine 117 and asparagine 119 to glutamine 155. Intrachain disulfides connect cysteine 78–cysteine 89, cysteine 83–cysteine 105, and cysteine 107–cysteine 116. An O-linked (Fuc...) threonine glycan is attached at threonine 88. The short motif at arginine 96–aspartate 98 is the Cell attachment site element. 3 residues coordinate Ca(2+): asparagine 119, isoleucine 120, and glutamate 122. 6 disulfides stabilise this stretch: cysteine 123/cysteine 134, cysteine 128/cysteine 143, cysteine 145/cysteine 154, cysteine 158/cysteine 314, cysteine 301/cysteine 305, and cysteine 319/cysteine 476. The Ca(2+) site is built by aspartate 136 and leucine 137. A glycan (N-linked (GlcNAc...) asparagine) is linked at asparagine 140. F5/8 type C domains follow at residues cysteine 158–cysteine 314 and cysteine 319–cysteine 476.

As to expression, expressed in angioblasts and early endothelial cells. By embryonic day 13.5, also expressed in a restricted group of non-endothelial cells including chondrocytes and retinal neurons.

It is found in the secreted. Promotes adhesion of endothelial cells through interaction with the alpha-v/beta-3 integrin receptor. Inhibits formation of vascular-like structures. May be involved in regulation of vascular morphogenesis of remodeling in embryonic development. The sequence is that of EGF-like repeat and discoidin I-like domain-containing protein 3 (Edil3) from Mus musculus (Mouse).